Here is a 355-residue protein sequence, read N- to C-terminus: UDP-N-acetylglucosamine--N-acetylmuramyl-(pentapeptide) pyrophosphoryl-undecaprenol N-acetylglucosamine transferase (355 aa).

UDP-N-acetyl-alpha-D-glucosamine is bound by residues T14–G16, N126, R162, S190, I244, and Q289.

The protein belongs to the glycosyltransferase 28 family. MurG subfamily.

The protein resides in the cell inner membrane. It carries out the reaction di-trans,octa-cis-undecaprenyl diphospho-N-acetyl-alpha-D-muramoyl-L-alanyl-D-glutamyl-meso-2,6-diaminopimeloyl-D-alanyl-D-alanine + UDP-N-acetyl-alpha-D-glucosamine = di-trans,octa-cis-undecaprenyl diphospho-[N-acetyl-alpha-D-glucosaminyl-(1-&gt;4)]-N-acetyl-alpha-D-muramoyl-L-alanyl-D-glutamyl-meso-2,6-diaminopimeloyl-D-alanyl-D-alanine + UDP + H(+). It functions in the pathway cell wall biogenesis; peptidoglycan biosynthesis. Its function is as follows. Cell wall formation. Catalyzes the transfer of a GlcNAc subunit on undecaprenyl-pyrophosphoryl-MurNAc-pentapeptide (lipid intermediate I) to form undecaprenyl-pyrophosphoryl-MurNAc-(pentapeptide)GlcNAc (lipid intermediate II). The protein is UDP-N-acetylglucosamine--N-acetylmuramyl-(pentapeptide) pyrophosphoryl-undecaprenol N-acetylglucosamine transferase of Paracidovorax citrulli (strain AAC00-1) (Acidovorax citrulli).